Here is a 434-residue protein sequence, read N- to C-terminus: ATP-dependent protease ATPase subunit HslU (434 aa).

Residues Val-18, Gly-60–Glu-65, Asp-247, Glu-312, and Arg-384 contribute to the ATP site.

It belongs to the ClpX chaperone family. HslU subfamily. A double ring-shaped homohexamer of HslV is capped on each side by a ring-shaped HslU homohexamer. The assembly of the HslU/HslV complex is dependent on binding of ATP.

It localises to the cytoplasm. In terms of biological role, ATPase subunit of a proteasome-like degradation complex; this subunit has chaperone activity. The binding of ATP and its subsequent hydrolysis by HslU are essential for unfolding of protein substrates subsequently hydrolyzed by HslV. HslU recognizes the N-terminal part of its protein substrates and unfolds these before they are guided to HslV for hydrolysis. The polypeptide is ATP-dependent protease ATPase subunit HslU (Phenylobacterium zucineum (strain HLK1)).